The sequence spans 457 residues: D-hydantoinase (457 aa).

Residues H57 and H59 each contribute to the Zn(2+) site. At S69 the chain carries Phosphoserine. K148 serves as a coordination point for Zn(2+). K148 bears the N6-carboxylysine mark. Substrate is bound at residue Y153. Residues H181 and H237 each contribute to the Zn(2+) site. T286 provides a ligand contact to substrate. D313 lines the Zn(2+) pocket. N335 serves as a coordination point for substrate.

The protein belongs to the metallo-dependent hydrolases superfamily. Hydantoinase/dihydropyrimidinase family. Homodimer and homotetramer. Zn(2+) is required as a cofactor. Post-translationally, carboxylation allows a single lysine to coordinate two zinc ions.

In terms of biological role, catalyzes the stereospecific hydrolysis of the cyclic amide bond of D-hydantoin derivatives. The protein is D-hydantoinase (hyuA) of Ralstonia pickettii (Burkholderia pickettii).